A 984-amino-acid polypeptide reads, in one-letter code: E3 ubiquitin-protein ligase BRE1A (984 aa).

The interval 1 to 34 (MSGAGNKRAAGEPGPSAPPEKKAGVEDSGTTVET) is disordered. Residues 43–90 (TEELDIRTLQTKNRKLAEMLDQRQAIEDELREHIEKLERRQATDDASL) adopt a coiled-coil conformation. The segment at 128 to 150 (VVPEPEPDSDSNQERKDERERGE) is disordered. The segment covering 139–150 (NQERKDERERGE) has biased composition (basic and acidic residues). Coiled coils occupy residues 236-378 (ADTL…VKET) and 429-907 (SLHK…TTKK). Residues 506 to 632 (SDLSKIRSRS…KHEDGRKKEA (127 aa)) form a disordered region. A compositionally biased stretch (polar residues) spans 514–526 (RSGSALLQSQSST). Basic and acidic residues-rich tracts occupy residues 527-540 (EDTK…KQEP) and 558-632 (SEVK…KKEA). The segment at 931 to 970 (CPCCNMRKKDAVLTKCFHVFCFECVKTRYDTRQRKCPKCN) adopts an RING-type zinc-finger fold.

Belongs to the BRE1 family. Component of the RNF20/40 complex (also known as BRE1 complex).

It localises to the nucleus. The enzyme catalyses S-ubiquitinyl-[E2 ubiquitin-conjugating enzyme]-L-cysteine + [acceptor protein]-L-lysine = [E2 ubiquitin-conjugating enzyme]-L-cysteine + N(6)-ubiquitinyl-[acceptor protein]-L-lysine.. It functions in the pathway protein modification; protein ubiquitination. Component of the RNF20/40 E3 ubiquitin-protein ligase complex that mediates monoubiquitination of 'Lys-120' of histone H2B (H2BK120ub1). H2BK120ub1 gives a specific tag for epigenetic transcriptional activation and is also prerequisite for histone H3 'Lys-4' and 'Lys-79' methylation (H3K4me and H3K79me, respectively). This chain is E3 ubiquitin-protein ligase BRE1A (RNF20), found in Gallus gallus (Chicken).